Consider the following 483-residue polypeptide: Rhamnulokinase (483 aa).

11–15 serves as a coordination point for ATP; that stretch reads ASSGR. Substrate is bound by residues glycine 79 and 234 to 236; that span reads HDT. Residue aspartate 235 is the Proton acceptor of the active site. Threonine 257 is a binding site for ATP. Substrate is bound at residue asparagine 294. Residue glutamine 302 participates in ATP binding. Cysteine 352 and cysteine 369 form a disulfide bridge. Glycine 401 is an ATP binding site.

Belongs to the rhamnulokinase family. It depends on Mg(2+) as a cofactor.

The enzyme catalyses L-rhamnulose + ATP = L-rhamnulose 1-phosphate + ADP + H(+). It participates in carbohydrate degradation; L-rhamnose degradation; glycerone phosphate from L-rhamnose: step 2/3. Its function is as follows. Involved in the catabolism of L-rhamnose (6-deoxy-L-mannose). Catalyzes the transfer of the gamma-phosphate group from ATP to the 1-hydroxyl group of L-rhamnulose to yield L-rhamnulose 1-phosphate. This Listeria monocytogenes serotype 4b (strain F2365) protein is Rhamnulokinase.